The primary structure comprises 184 residues: ATP synthase subunit b, chloroplastic (184 aa).

Residues 27-49 form a helical membrane-spanning segment; sequence LATNLINLSVVLGVLIFFGKGVL.

This sequence belongs to the ATPase B chain family. In terms of assembly, F-type ATPases have 2 components, F(1) - the catalytic core - and F(0) - the membrane proton channel. F(1) has five subunits: alpha(3), beta(3), gamma(1), delta(1), epsilon(1). F(0) has four main subunits: a(1), b(1), b'(1) and c(10-14). The alpha and beta chains form an alternating ring which encloses part of the gamma chain. F(1) is attached to F(0) by a central stalk formed by the gamma and epsilon chains, while a peripheral stalk is formed by the delta, b and b' chains.

It localises to the plastid. Its subcellular location is the chloroplast thylakoid membrane. In terms of biological role, f(1)F(0) ATP synthase produces ATP from ADP in the presence of a proton or sodium gradient. F-type ATPases consist of two structural domains, F(1) containing the extramembraneous catalytic core and F(0) containing the membrane proton channel, linked together by a central stalk and a peripheral stalk. During catalysis, ATP synthesis in the catalytic domain of F(1) is coupled via a rotary mechanism of the central stalk subunits to proton translocation. Component of the F(0) channel, it forms part of the peripheral stalk, linking F(1) to F(0). This Liriodendron tulipifera (Tuliptree) protein is ATP synthase subunit b, chloroplastic.